A 450-amino-acid chain; its full sequence is UPF0210 protein CPE1497 (450 aa).

This sequence belongs to the UPF0210 family. In terms of assembly, homodimer.

This chain is UPF0210 protein CPE1497, found in Clostridium perfringens (strain 13 / Type A).